Reading from the N-terminus, the 368-residue chain is MSSFKPTINRRQSTKIYVGNVPIGGDAPIAVQSMTNTRTTDIEATVAQIKALERVGADIVRISVPTMDAAEAFKSIKQQVNIPLVADIHFDYRIALKVAEYGVDCLRINPGNIGREDRIRAVVDCAKDKNIPIRIGVNAGSLEKDLQEKYGEPTPEALLESALRHVEILDRLNFDQFKVSVKASDVFLAVESYRLLAKAIKQPLHLGITEAGGARAGAVKSAVGLGMLLAEGIGDTLRVSLAADPVEEIKVGFDILKSLRIRSHGINFIACPTCSRQEFDVIGTVNALEQRLEDIVTPMDVSIIGCVVNGPGEALISDLGVTGGNKKSGYYLDGKRQKERFDNEDLINQLEAKIRAKVAQQDPKNRII.

[4Fe-4S] cluster is bound by residues cysteine 271, cysteine 274, cysteine 306, and glutamate 313.

The protein belongs to the IspG family. [4Fe-4S] cluster is required as a cofactor.

It catalyses the reaction (2E)-4-hydroxy-3-methylbut-2-enyl diphosphate + oxidized [flavodoxin] + H2O + 2 H(+) = 2-C-methyl-D-erythritol 2,4-cyclic diphosphate + reduced [flavodoxin]. It participates in isoprenoid biosynthesis; isopentenyl diphosphate biosynthesis via DXP pathway; isopentenyl diphosphate from 1-deoxy-D-xylulose 5-phosphate: step 5/6. Converts 2C-methyl-D-erythritol 2,4-cyclodiphosphate (ME-2,4cPP) into 1-hydroxy-2-methyl-2-(E)-butenyl 4-diphosphate. This Histophilus somni (strain 129Pt) (Haemophilus somnus) protein is 4-hydroxy-3-methylbut-2-en-1-yl diphosphate synthase (flavodoxin).